The chain runs to 456 residues: Proline-specific permease ProY (456 aa).

At 1-17 (MESNNKLKRGLSTRHIR) the chain is on the cytoplasmic side. The next 2 helical transmembrane spans lie at 18-38 (FMALGSAIGTGLFYGSADAIK) and 39-59 (MAGPSVLLAYIIGGVAAYIIM). The Cytoplasmic segment spans residues 60 to 95 (RALGEMSVHNPAASSFSRYAQENLGPLAGYITGWTY). Transmembrane regions (helical) follow at residues 96-116 (CFEILIVAIADVTAFGIYMGV) and 117-137 (WFPAVPHWIWVLSVVLIICAI). Over 138–156 (NLMSVKVFGELEFWFSFFK) the chain is Cytoplasmic. A helical membrane pass occupies residues 157–177 (VATIIIMIVAGIGIIVWGIGN). Topologically, residues 178–197 (GGQPTGIHNLWSNGGFFSNG) are periplasmic. Residues 198 to 218 (WLGMIMSLQMVMFAYGGIEII) form a helical membrane-spanning segment. Residues 219 to 242 (GITAGEAKDPEKSIPRAINSVPMR) lie on the Cytoplasmic side of the membrane. A helical transmembrane segment spans residues 243–263 (ILVFYVGTLFVIMSIYPWNQV). Over 264–277 (GTNGSPFVLTFQHM) the chain is Periplasmic. A helical transmembrane segment spans residues 278–298 (GITFAASILNFVVLTASLSAI). At 299–331 (NSDVFGVGRMLHGMAEQGSAPKVFAKTSRRGIP) the chain is on the cytoplasmic side. The chain crosses the membrane as a helical span at residues 332–352 (WVTVLVMTIALLFAVYLNYIM). The Periplasmic segment spans residues 353-355 (PEN). The chain crosses the membrane as a helical span at residues 356–376 (VFLVIASLATFATVWVWIMIL). The Cytoplasmic segment spans residues 377–399 (LSQIAFRRRLPPEEVKALKFKVP). Residues 400 to 420 (GGVVTTIAGLIFLVFIIALIG) traverse the membrane as a helical segment. Topologically, residues 421-424 (YHPD) are periplasmic. A helical transmembrane segment spans residues 425-445 (TRISLYVGFAWIVLLLIGWIF). The Cytoplasmic segment spans residues 446-456 (KRRRDRQLAQA).

Belongs to the amino acid-polyamine-organocation (APC) superfamily. Amino acid transporter (AAT) (TC 2.A.3.1) family.

It is found in the cell inner membrane. Its function is as follows. Permease that is involved in the transport across the cytoplasmic membrane of proline. The polypeptide is Proline-specific permease ProY (proY) (Salmonella typhimurium (strain LT2 / SGSC1412 / ATCC 700720)).